The primary structure comprises 246 residues: Large ribosomal subunit protein uL3 (246 aa).

Glutamine 151 carries the post-translational modification N5-methylglutamine.

It belongs to the universal ribosomal protein uL3 family. In terms of assembly, part of the 50S ribosomal subunit. Forms a cluster with proteins L14 and L19. Post-translationally, methylated by PrmB.

Its function is as follows. One of the primary rRNA binding proteins, it binds directly near the 3'-end of the 23S rRNA, where it nucleates assembly of the 50S subunit. The protein is Large ribosomal subunit protein uL3 of Bartonella henselae (strain ATCC 49882 / DSM 28221 / CCUG 30454 / Houston 1) (Rochalimaea henselae).